A 429-amino-acid chain; its full sequence is Enolase (429 aa).

Q162 contacts (2R)-2-phosphoglycerate. E204 serves as the catalytic Proton donor. 3 residues coordinate Mg(2+): D241, E283, and D310. (2R)-2-phosphoglycerate contacts are provided by K335, R364, S365, and K386. K335 acts as the Proton acceptor in catalysis.

Belongs to the enolase family. Requires Mg(2+) as cofactor.

The protein resides in the cytoplasm. It is found in the secreted. The protein localises to the cell surface. It catalyses the reaction (2R)-2-phosphoglycerate = phosphoenolpyruvate + H2O. The protein operates within carbohydrate degradation; glycolysis; pyruvate from D-glyceraldehyde 3-phosphate: step 4/5. Its function is as follows. Catalyzes the reversible conversion of 2-phosphoglycerate (2-PG) into phosphoenolpyruvate (PEP). It is essential for the degradation of carbohydrates via glycolysis. This chain is Enolase, found in Mycobacterium sp. (strain JLS).